Reading from the N-terminus, the 634-residue chain is tRNA uridine 5-carboxymethylaminomethyl modification enzyme MnmG (634 aa).

Position 14-19 (14-19 (GGGHAG)) interacts with FAD. 279 to 293 (GPRYCPSIEDKVVRF) is an NAD(+) binding site.

Belongs to the MnmG family. As to quaternary structure, homodimer. Heterotetramer of two MnmE and two MnmG subunits. It depends on FAD as a cofactor.

The protein resides in the cytoplasm. Functionally, NAD-binding protein involved in the addition of a carboxymethylaminomethyl (cmnm) group at the wobble position (U34) of certain tRNAs, forming tRNA-cmnm(5)s(2)U34. This is tRNA uridine 5-carboxymethylaminomethyl modification enzyme MnmG from Xanthomonas oryzae pv. oryzae (strain KACC10331 / KXO85).